Here is a 113-residue protein sequence, read N- to C-terminus: Sensorin-A (113 aa).

Positions 1-32 (MPSRAATSPLNVQMMVVLCIVCLALQAVAANA) are cleaved as a signal peptide. Phenylalanine amide is present on Phe54. Positions 58–113 (SSSETYSTNLINLLSRQLVSQEELRAILEKQPILLDEVVKILDRNDDGYITVADLL) are excised as a propeptide. Residues 87–113 (KQPILLDEVVKILDRNDDGYITVADLL) form the EF-hand domain. Positions 100, 102, 104, 106, and 111 each coordinate Ca(2+).

Seems to be specific to the mechanosensory neurons of the central nervous system.

Its subcellular location is the secreted. May function as an inhibitory cotransmitter acting in conjunction with the fast excitatory transmitter released by sensory neurons. The peptide selectively inhibits certain postsynaptic cells probably by means of sensorin A release. This is Sensorin-A (PSC1) from Aplysia californica (California sea hare).